The following is a 188-amino-acid chain: MALVENLQQAVDALRKGCVIAYPTEGVFGLGCDPDNQTAMLRLLAIKQRPVEKGVILIAASYAQLRPYVDETQLTAEQLTQVLASWPAPLTWVMPASGDTPSWVRGQFDTVAVRVSDHPVVQKLCLAFGKPLTSTSANLSGQPACVTQQEVMVQLGNQIAVVVEGKTSGRHGPSEIRDARSLQVLRQG.

The 185-residue stretch at 4–188 (VENLQQAVDA…ARSLQVLRQG (185 aa)) folds into the YrdC-like domain.

Belongs to the SUA5 family. TsaC subfamily.

Its subcellular location is the cytoplasm. It catalyses the reaction L-threonine + hydrogencarbonate + ATP = L-threonylcarbamoyladenylate + diphosphate + H2O. Its function is as follows. Required for the formation of a threonylcarbamoyl group on adenosine at position 37 (t(6)A37) in tRNAs that read codons beginning with adenine. Catalyzes the conversion of L-threonine, HCO(3)(-)/CO(2) and ATP to give threonylcarbamoyl-AMP (TC-AMP) as the acyladenylate intermediate, with the release of diphosphate. In Vibrio cholerae serotype O1 (strain ATCC 39541 / Classical Ogawa 395 / O395), this protein is Threonylcarbamoyl-AMP synthase.